Consider the following 526-residue polypeptide: Seipin-2 (526 aa).

The tract at residues P33–K77 is disordered. Residues S58–D70 are compositionally biased toward low complexity. A run of 4 helical transmembrane segments spans residues S195–F215, F224–F243, F258–S278, and L483–C503.

Belongs to the seipin family. Expressed in seeds, seedlings, leaves, stems and roots. Not detected in flowers.

The protein localises to the endoplasmic reticulum membrane. In terms of biological role, involved in lipid metabolism and lipid droplet (LD) morphology, number, and size. Supports the formation of small-sized LDs and modulates triacylglycerol accumulation. Induces probably a reorganization of the endoplasmic reticulum into LD-forming domains. This is Seipin-2 from Arabidopsis thaliana (Mouse-ear cress).